Consider the following 330-residue polypeptide: D-cysteine desulfhydrase (330 aa).

An N6-(pyridoxal phosphate)lysine modification is found at lysine 52.

It belongs to the ACC deaminase/D-cysteine desulfhydrase family. As to quaternary structure, homodimer. Pyridoxal 5'-phosphate serves as cofactor.

It catalyses the reaction D-cysteine + H2O = hydrogen sulfide + pyruvate + NH4(+) + H(+). In terms of biological role, catalyzes the alpha,beta-elimination reaction of D-cysteine and of several D-cysteine derivatives. It could be a defense mechanism against D-cysteine. In Yersinia enterocolitica serotype O:8 / biotype 1B (strain NCTC 13174 / 8081), this protein is D-cysteine desulfhydrase.